A 305-amino-acid chain; its full sequence is Porphobilinogen deaminase (305 aa).

The residue at position 238 (Cys-238) is an S-(dipyrrolylmethanemethyl)cysteine.

Belongs to the HMBS family. Monomer. It depends on dipyrromethane as a cofactor.

The enzyme catalyses 4 porphobilinogen + H2O = hydroxymethylbilane + 4 NH4(+). It participates in porphyrin-containing compound metabolism; protoporphyrin-IX biosynthesis; coproporphyrinogen-III from 5-aminolevulinate: step 2/4. Its function is as follows. Tetrapolymerization of the monopyrrole PBG into the hydroxymethylbilane pre-uroporphyrinogen in several discrete steps. The chain is Porphobilinogen deaminase from Rubrobacter xylanophilus (strain DSM 9941 / JCM 11954 / NBRC 16129 / PRD-1).